The chain runs to 363 residues: 3-dehydroquinate synthase (363 aa).

Residues 134–135 (TT), Lys147, Lys156, and 174–177 (TLIT) contribute to the NAD(+) site. Zn(2+) is bound by residues Glu189, His254, and His271.

It belongs to the sugar phosphate cyclases superfamily. Dehydroquinate synthase family. The cofactor is NAD(+). It depends on Co(2+) as a cofactor. Zn(2+) is required as a cofactor.

It is found in the cytoplasm. The enzyme catalyses 7-phospho-2-dehydro-3-deoxy-D-arabino-heptonate = 3-dehydroquinate + phosphate. The protein operates within metabolic intermediate biosynthesis; chorismate biosynthesis; chorismate from D-erythrose 4-phosphate and phosphoenolpyruvate: step 2/7. Catalyzes the conversion of 3-deoxy-D-arabino-heptulosonate 7-phosphate (DAHP) to dehydroquinate (DHQ). This Prochlorococcus marinus subsp. pastoris (strain CCMP1986 / NIES-2087 / MED4) protein is 3-dehydroquinate synthase.